The chain runs to 47 residues: Lysis protein for colicin E7 (47 aa).

An N-terminal signal peptide occupies residues 1-19; the sequence is MKKITGIILLLLAAIILAA. Cys20 carries the N-palmitoyl cysteine lipid modification. Residue Cys20 is the site of S-diacylglycerol cysteine attachment.

Its subcellular location is the cell outer membrane. In terms of biological role, lysis proteins are required for both colicin release and partial cell lysis. The protein is Lysis protein for colicin E7 (lys) of Escherichia coli.